We begin with the raw amino-acid sequence, 738 residues long: Exocyst complex component 3 (738 aa).

Residues 28 to 91 (LEKVEQYRHR…DEVERLLRGV (64 aa)) are a coiled coil.

Belongs to the SEC6 family. The exocyst complex is composed of Sec3/Exoc1, Sec5/Exoc2, Sec6/Exoc3, Sec8/Exoc4, Sec10/Exoc5, Sec15/Exoc6, Exo70/Exoc7 and Exo84/Exoc8.

Its function is as follows. Component of the exocyst complex involved in the docking of exocytic vesicles with fusion sites on the plasma membrane. This is Exocyst complex component 3 from Drosophila melanogaster (Fruit fly).